A 96-amino-acid chain; its full sequence is Co-chaperonin GroES (96 aa).

This sequence belongs to the GroES chaperonin family. As to quaternary structure, heptamer of 7 subunits arranged in a ring. Interacts with the chaperonin GroEL.

The protein localises to the cytoplasm. Its function is as follows. Together with the chaperonin GroEL, plays an essential role in assisting protein folding. The GroEL-GroES system forms a nano-cage that allows encapsulation of the non-native substrate proteins and provides a physical environment optimized to promote and accelerate protein folding. GroES binds to the apical surface of the GroEL ring, thereby capping the opening of the GroEL channel. This chain is Co-chaperonin GroES, found in Acidithiobacillus ferrooxidans (strain ATCC 23270 / DSM 14882 / CIP 104768 / NCIMB 8455) (Ferrobacillus ferrooxidans (strain ATCC 23270)).